Reading from the N-terminus, the 504-residue chain is Phosphoenolpyruvate carboxylase (504 aa).

A compositionally biased stretch (polar residues) spans 1–16 (MTSRKIPSIMGTQHPD). Residues 1–21 (MTSRKIPSIMGTQHPDNANAP) form a disordered region.

The protein belongs to the PEPCase type 2 family. In terms of assembly, homotetramer. Mg(2+) is required as a cofactor.

It carries out the reaction oxaloacetate + phosphate = phosphoenolpyruvate + hydrogencarbonate. Functionally, catalyzes the irreversible beta-carboxylation of phosphoenolpyruvate (PEP) to form oxaloacetate (OAA), a four-carbon dicarboxylic acid source for the tricarboxylic acid cycle. This chain is Phosphoenolpyruvate carboxylase, found in Leuconostoc mesenteroides subsp. mesenteroides (strain ATCC 8293 / DSM 20343 / BCRC 11652 / CCM 1803 / JCM 6124 / NCDO 523 / NBRC 100496 / NCIMB 8023 / NCTC 12954 / NRRL B-1118 / 37Y).